The primary structure comprises 294 residues: Arsenical-resistance protein ARR1 (294 aa).

Residues 1–11 (MAKPRGRKGGR) are compositionally biased toward basic residues. The segment at 1 to 29 (MAKPRGRKGGRKPSLTPPKNKRAAQLRAS) is disordered. Residues 22-45 (RAAQLRASQNAFRKRKLERLEELE) form a basic motif region. The bZIP domain maps to 22–72 (RAAQLRASQNAFRKRKLERLEELEKKEAQLTVTNDQIHILKKENELLHFML). Residues 44 to 72 (LEKKEAQLTVTNDQIHILKKENELLHFML) form a leucine-zipper region. Positions 132, 137, and 274 each coordinate arsenite.

The protein belongs to the bZIP family. YAP subfamily. As to quaternary structure, homodimer. Phosphorylation by HOG1 promotes nuclear localization in the presence of arsenic.

The protein resides in the cytoplasm. The protein localises to the nucleus. Transcriptional activity is controlled by regulated degradation by the ubiquitin-proteasome pathway in absence of arsenic. Arsenic-exposure results in stabilization and increased transcriptional activity. Functionally, transcription activator required for resistance to arsenic compounds and for a regulated expression of ACR2, ACR3 and YCF1. This is Arsenical-resistance protein ARR1 from Saccharomyces cerevisiae (strain ATCC 204508 / S288c) (Baker's yeast).